Reading from the N-terminus, the 852-residue chain is Lon protease homolog 2, peroxisomal (852 aa).

Ser-2 carries the N-acetylserine modification. Positions 13–222 constitute a Lon N-terminal domain; it reads LPLLLTHESV…MTIPLLVRQI (210 aa). 375 to 382 lines the ATP pocket; it reads GPPGVGKT. The Lon proteolytic domain occupies 651–837; the sequence is LSQPGVAIGL…DEVLNAAFDG (187 aa). Active-site residues include Ser-743 and Lys-786. The Microbody targeting signal motif lies at 850–852; sequence SKL.

It belongs to the peptidase S16 family. In terms of assembly, interacts with PEX5. Interacts with TYSND1. May interact with enzymes involved in beta-oxidation of fatty acids, including ACOX1/AOX.

Its subcellular location is the peroxisome matrix. It carries out the reaction Hydrolysis of proteins in presence of ATP.. Functionally, ATP-dependent serine protease that mediates the selective degradation of misfolded and unassembled polypeptides in the peroxisomal matrix. Necessary for type 2 peroxisome targeting signal (PTS2)-containing protein processing and facilitates peroxisome matrix protein import. May indirectly regulate peroxisomal fatty acid beta-oxidation through degradation of the self-processed forms of TYSND1. The protein is Lon protease homolog 2, peroxisomal (Lonp2) of Mus musculus (Mouse).